The following is a 648-amino-acid chain: MVSQSIGWGDSPVDLCEGSNRAFQDTDQPACQLDVRLLRHKASWINPLCVQQPLQELCPQRPTVQSSENHVVLDTPSPLRLSILSYRDSLAEMPLSENTADVICSNSAHCSGGKEGDFFLATEEQEVHLQQESLLKNPKTVATSPSPKEGSARSESPHLTASTDDGDARSSSRSHAWNFFPLETFMLPADVEKENLHFYAADIIISVIENMKCNLPNQQQPERWDTEDASRLRGTGAEMTFYTHIKQEPGSSASSHTGCEGCAALQVSPVAETLSYCPVAGEACKHDLNKLVMLELGKYNDITKGCRCSYNSSKSATCESNLSPAGCLARELFRGFCKCWMLSEVNCQLPGSPTTASSGVGDEEYAEEDFDSSVDAAREVMLKSRVPGTEDWVLPRCQIILTVHPPIKRDIAVVAQNFFCAGCGTPIQPKFVKRLRYCEYLGKYFCASCHSSAESCIPARILTMWDFRKYQVSDFSKWLLDSVWHQPVFKLLGGHHSLYAKAKELDRVKDLQEQLFHIKKLLKTCRFADSVLKEFEQVPSHLTDECHIFSMDDFLRTKKGLLAPLLKDILRASLAHVDSCELCQGKGFICEFCQSTTVIFPFQTTTCRRCAACRACFHKQCFQSSRCPRCARIIARRQHLESLPTAAT.

Polar residues-rich tracts occupy residues 131-146 and 157-173; these read QESL…TSPS and PHLT…SSSR. A disordered region spans residues 131-173; sequence QESLLKNPKTVATSPSPKEGSARSESPHLTASTDDGDARSSSR. At Ser-144 the chain carries Phosphoserine. The interaction with UVRAG stretch occupies residues 183 to 222; it reads ETFMLPADVEKENLHFYAADIIISVIENMKCNLPNQQQPE. N6-acetyllysine is present on residues Lys-469, Lys-509, Lys-519, Lys-559, and Lys-619.

Interacts with UVRAG; the interaction is direct and promotes association with the PI3K/PI3KC3 and HOPS complexes. Interacts with STX17. Phosphorylated by MTOR at Ser-144 under nutrient-rich conditions. Phosphorylation prevents acetylation by KAT5/TIP60 and impairs RUBCNL/PACER function and autophagosome maturation. Under autophagy induction, Phosphorylation by MTOR is repressed, enabling acetylation by KAT5/TIP60. Post-translationally, acetylated by KAT5/TIP60 under autophagy induction, promoting autophagosome maturation and lipid metabolism. Acetylation is prevented by phosphorylation by MTOR. Lys-469 and Lys-559 constitute the key sites for tuning function in autophagy.

Its subcellular location is the cytoplasmic vesicle. The protein resides in the autophagosome membrane. Regulator of autophagy that promotes autophagosome maturation by facilitating the biogenesis of phosphatidylinositol 3-phosphate (PtdIns(3)P) in late steps of autophagy. Acts by antagonizing RUBCN, thereby stimulating phosphatidylinositol 3-kinase activity of the PI3K/PI3KC3 complex. Following anchorage to the autophagosomal SNARE STX17, promotes the recruitment of PI3K/PI3KC3 and HOPS complexes to the autophagosome to regulate the fusion specificity of autophagosomes with late endosomes/lysosomes. Binds phosphoinositides phosphatidylinositol 3-phosphate (PtdIns(3)P), 4-phosphate (PtdIns(4)P) and 5-phosphate (PtdIns(5)P). In addition to its role in autophagy, acts as a regulator of lipid and glycogen homeostasis. May act as a tumor suppressor. The protein is Protein associated with UVRAG as autophagy enhancer of Mus musculus (Mouse).